The following is a 757-amino-acid chain: Cellulose synthase-like protein B5 (757 aa).

2 helical membrane passes run 24–44 (AVDL…ILHI) and 50–70 (VWLL…IFTC). Catalysis depends on residues Asp-136 and Asp-460. 6 helical membrane passes run 531–551 (LAYF…YCLL), 572–592 (IVTL…SLGF), 613–633 (LFSI…GFVI), 671–691 (LFIP…GYLV), 704–724 (GSGL…LPFL), and 735–755 (IPLS…FFCV).

This sequence belongs to the glycosyltransferase 2 family. Plant cellulose synthase-like B subfamily. In terms of tissue distribution, expressed in young seedlings, primarily in the vascular tissue. Expressed in the root cap.

It is found in the golgi apparatus membrane. Functionally, thought to be a Golgi-localized beta-glycan synthase that polymerize the backbones of noncellulosic polysaccharides (hemicelluloses) of plant cell wall. In Arabidopsis thaliana (Mouse-ear cress), this protein is Cellulose synthase-like protein B5 (CSLB5).